We begin with the raw amino-acid sequence, 103 residues long: Histone H4 (103 aa).

Residues 1-14 (MTGRGKGGKGLGKG) show a composition bias toward gly residues. The interval 1-20 (MTGRGKGGKGLGKGGAKRHR) is disordered. 2 positions are modified to N6-acetyl-N6-methyllysine; alternate: Lys-6 and Lys-13. Residues 17-21 (KRHRK) mediate DNA binding.

Belongs to the histone H4 family. In terms of assembly, the nucleosome is a histone octamer containing two molecules each of H2A, H2B, H3 and H4 assembled in one H3-H4 heterotetramer and two H2A-H2B heterodimers. The octamer wraps approximately 147 bp of DNA.

It localises to the nucleus. The protein localises to the chromosome. Its function is as follows. Core component of nucleosome. Nucleosomes wrap and compact DNA into chromatin, limiting DNA accessibility to the cellular machineries which require DNA as a template. Histones thereby play a central role in transcription regulation, DNA repair, DNA replication and chromosomal stability. DNA accessibility is regulated via a complex set of post-translational modifications of histones, also called histone code, and nucleosome remodeling. This Diadromus pulchellus (Parasitic wasp) protein is Histone H4.